The following is a 388-amino-acid chain: Tumor protein p53-inducible protein 13 (388 aa).

The signal sequence occupies residues 1-27; it reads MVPPPPPPSRLLLVALVGLLSLHEVVA. At 28 to 304 the chain is on the extracellular side; the sequence is EPAEEAGTRC…ARGPTPRTEE (277 aa). The chain crosses the membrane as a helical span at residues 305–325; the sequence is AAWAAMALTFLLVLLTLATLC. Topologically, residues 326–388 are cytoplasmic; that stretch reads TRLHRNFRRS…DSGPDSESSD (63 aa). Over residues 361-372 the composition is skewed to basic residues; it reads PSRRIKRSRRRP. The tract at residues 361–388 is disordered; it reads PSRRIKRSRRRPLLPPTPDSGPDSESSD.

It is found in the cell membrane. Its subcellular location is the cytoplasm. Functionally, may act as a tumor suppressor. Inhibits tumor cell growth, when overexpressed. The chain is Tumor protein p53-inducible protein 13 (Tp53i13) from Rattus norvegicus (Rat).